A 167-amino-acid chain; its full sequence is Zymogen granule membrane protein 16 (167 aa).

Positions Met-1–Gly-16 are cleaved as a signal peptide. Positions Ser-24 to Val-159 constitute a Jacalin-type lectin domain.

Belongs to the jacalin lectin family. As to expression, highly expressed in liver. Detected at lower levels in colon, ileum and jejunum.

Its subcellular location is the secreted. It localises to the extracellular space. It is found in the extracellular matrix. The protein resides in the zymogen granule lumen. The protein localises to the golgi apparatus lumen. Its function is as follows. May play a role in protein trafficking. May act as a linker molecule between the submembranous matrix on the luminal side of zymogen granule membrane (ZGM) and aggregated secretory proteins during granule formation in the TGN. The sequence is that of Zymogen granule membrane protein 16 (ZG16) from Homo sapiens (Human).